Reading from the N-terminus, the 332-residue chain is Ribose-phosphate pyrophosphokinase (332 aa).

55–57 (DGE) serves as a coordination point for ATP. Positions 148 and 187 each coordinate Mg(2+). The active site involves Lys-211. Residues Arg-213, Asp-237, and 241–245 (DTGGT) each bind D-ribose 5-phosphate.

It belongs to the ribose-phosphate pyrophosphokinase family. Class I subfamily. As to quaternary structure, homohexamer. Mg(2+) serves as cofactor.

Its subcellular location is the cytoplasm. It carries out the reaction D-ribose 5-phosphate + ATP = 5-phospho-alpha-D-ribose 1-diphosphate + AMP + H(+). It functions in the pathway metabolic intermediate biosynthesis; 5-phospho-alpha-D-ribose 1-diphosphate biosynthesis; 5-phospho-alpha-D-ribose 1-diphosphate from D-ribose 5-phosphate (route I): step 1/1. Involved in the biosynthesis of the central metabolite phospho-alpha-D-ribosyl-1-pyrophosphate (PRPP) via the transfer of pyrophosphoryl group from ATP to 1-hydroxyl of ribose-5-phosphate (Rib-5-P). The polypeptide is Ribose-phosphate pyrophosphokinase (Prochlorococcus marinus (strain MIT 9313)).